Here is a 42-residue protein sequence, read N- to C-terminus: IDYRKCQASQILKEHGMDKVIPLPELVCTMFHISGLSPQAEV.

In terms of domain architecture, C-type lysozyme spans 1-42 (IDYRKCQASQILKEHGMDKVIPLPELVCTMFHISGLSPQAEV).

This sequence belongs to the glycosyl hydrolase 22 family. Lactose synthase (LS) is a heterodimer of a catalytic component, beta1,4-galactosyltransferase (beta4Gal-T1) and a regulatory component, alpha-lactalbumin (LA). As to expression, mammary gland specific. Secreted in milk.

The protein resides in the secreted. Functionally, regulatory subunit of lactose synthase, changes the substrate specificity of galactosyltransferase in the mammary gland making glucose a good acceptor substrate for this enzyme. This enables LS to synthesize lactose, the major carbohydrate component of milk. In other tissues, galactosyltransferase transfers galactose onto the N-acetylglucosamine of the oligosaccharide chains in glycoproteins. This Macropus giganteus (Eastern gray kangaroo) protein is Alpha-lactalbumin I (LALBA).